The chain runs to 321 residues: Ribonuclease Z (321 aa).

7 residues coordinate Zn(2+): His-62, His-64, Asp-66, His-67, His-139, Asp-209, and His-268. Asp-66 serves as the catalytic Proton acceptor.

It belongs to the RNase Z family. In terms of assembly, homodimer. Zn(2+) is required as a cofactor.

It catalyses the reaction Endonucleolytic cleavage of RNA, removing extra 3' nucleotides from tRNA precursor, generating 3' termini of tRNAs. A 3'-hydroxy group is left at the tRNA terminus and a 5'-phosphoryl group is left at the trailer molecule.. Zinc phosphodiesterase, which displays some tRNA 3'-processing endonuclease activity. Probably involved in tRNA maturation, by removing a 3'-trailer from precursor tRNA. The polypeptide is Ribonuclease Z (Pseudomonas putida (strain W619)).